The chain runs to 135 residues: Large ribosomal subunit protein uL16c (135 aa).

It belongs to the universal ribosomal protein uL16 family. As to quaternary structure, part of the 50S ribosomal subunit.

The protein resides in the plastid. It localises to the chloroplast. This chain is Large ribosomal subunit protein uL16c, found in Populus alba (White poplar).